The chain runs to 827 residues: Protein SEY1 (827 aa).

Residues 1–26 form a disordered region; that stretch reads MSQSSPSNAETDEDLSTTSSSSSFVP. Over 1 to 719 the chain is Cytoplasmic; that stretch reads MSQSSPSNAE…KRSIVQHVTQ (719 aa). In terms of domain architecture, GB1/RHD3-type G spans 63 to 291; that stretch reads GNNYHIISVF…VKKDLFRPNY (229 aa). 73–80 is a GTP binding site; the sequence is GSQSTGKS. Coiled-coil stretches lie at residues 389–409 and 472–492; these read KSVY…KFRE and VSNL…VELK. The chain crosses the membrane as a helical span at residues 720–740; that stretch reads IPYYIYLVIMVLGWNEFMAIV. The Lumenal portion of the chain corresponds to 741–743; the sequence is RNP. A helical membrane pass occupies residues 744–764; the sequence is LFFSLVLVFGAGLYILYSMNL. Over 765–827 the chain is Cytoplasmic; it reads LKPAMVVVQR…VVETIEMQDL (63 aa). A coiled-coil region spans residues 803–823; sequence QKISASNREKVEEEKVVETIE.

Belongs to the TRAFAC class dynamin-like GTPase superfamily. GB1/RHD3 GTPase family. RHD3 subfamily.

Its subcellular location is the endoplasmic reticulum membrane. Its function is as follows. Cooperates with the reticulon proteins and tubule-shaping DP1 family proteins to generate and maintain the structure of the tubular endoplasmic reticulum network. Has GTPase activity, which is required for its function in ER organization. The protein is Protein SEY1 of Scheffersomyces stipitis (strain ATCC 58785 / CBS 6054 / NBRC 10063 / NRRL Y-11545) (Yeast).